The chain runs to 292 residues: Nucleotide-binding protein azo0399 (292 aa).

8-15 (GLSGSGKS) is an ATP binding site. 57–60 (DMRS) contacts GTP.

It belongs to the RapZ-like family.

Its function is as follows. Displays ATPase and GTPase activities. The sequence is that of Nucleotide-binding protein azo0399 from Azoarcus sp. (strain BH72).